We begin with the raw amino-acid sequence, 248 residues long: Cobalt transport protein CbiM (248 aa).

Positions 1 to 29 (MKRVSVKNYLVCLLIAVCAIFVFPANASA) are cleaved as a signal peptide. A run of 6 helical transmembrane segments spans residues 40–60 (GWCISWGVMCMPFLVIGFFSI), 72–92 (TLLAMCGAFAFVLSALKMPSV), 104–124 (LGAVLFGPTAMSVIGAIILLF), 136–156 (TLGANVFSMAIVGPLVSFGVF), 167–187 (GLAVFLAVFFGDLMTYVITSV), and 210–230 (IFGFTQVPLAVCEGLLTVVIY).

It belongs to the CbiM family. In terms of assembly, forms an energy-coupling factor (ECF) transporter complex composed of an ATP-binding protein (A component, CbiO), a transmembrane protein (T component, CbiQ) and 2 possible substrate-capture proteins (S components, CbiM and CbiN) of unknown stoichimetry.

It is found in the cell membrane. The protein operates within cofactor biosynthesis; adenosylcobalamin biosynthesis. Functionally, part of the energy-coupling factor (ECF) transporter complex CbiMNOQ involved in cobalt import. This chain is Cobalt transport protein CbiM, found in Ruminiclostridium cellulolyticum (strain ATCC 35319 / DSM 5812 / JCM 6584 / H10) (Clostridium cellulolyticum).